Reading from the N-terminus, the 301-residue chain is Cell division protein kinase 2 homolog CRK1 (301 aa).

The region spanning 5–297 (YERQEKIGEG…AADALNHPYF (293 aa)) is the Protein kinase domain. ATP-binding positions include 11–19 (IGEGTYGVV) and lysine 34. Aspartate 127 (proton acceptor) is an active-site residue. A Phosphothreonine; by CAK modification is found at threonine 160.

Belongs to the protein kinase superfamily. CMGC Ser/Thr protein kinase family. CDC2/CDKX subfamily. In terms of assembly, forms a stable but non-covalent complex with a regulatory subunit and with a cyclin.

It catalyses the reaction [DNA-directed RNA polymerase] + ATP = phospho-[DNA-directed RNA polymerase] + ADP + H(+). Phosphorylation at Thr-15 or Tyr-16 inactivates the enzyme, while phosphorylation at Thr-160 activates it. In terms of biological role, may be involved in some stage-specific role in the promastigote cell cycle. The sequence is that of Cell division protein kinase 2 homolog CRK1 (CRK1) from Leishmania mexicana.